The primary structure comprises 468 residues: Protein CA_C1420 (468 aa).

The interval 1-289 (MSLNGFYLLP…LKELERIRKD (289 aa)) is unknown. One can recognise an AMMECR1 domain in the interval 296–468 (QEKDPYVKLA…KFMVTRHKES (173 aa)).

This is Protein CA_C1420 from Clostridium acetobutylicum (strain ATCC 824 / DSM 792 / JCM 1419 / IAM 19013 / LMG 5710 / NBRC 13948 / NRRL B-527 / VKM B-1787 / 2291 / W).